We begin with the raw amino-acid sequence, 260 residues long: Snake venom serine protease homolog 2A (260 aa).

The N-terminal stretch at 1 to 18 (MVLIRVLANLLILQLSYA) is a signal peptide. A propeptide spanning residues 19-24 (QKSSEL) is cleaved from the precursor. In terms of domain architecture, Peptidase S1 spans 25 to 251 (IIGGDECNIN…HLDWIKSIIA (227 aa)). 6 disulfide bridges follow: Cys31-Cys165, Cys52-Cys68, Cys100-Cys258, Cys144-Cys212, Cys176-Cys191, and Cys202-Cys227. 3 N-linked (GlcNAc...) asparagine glycosylation sites follow: Asn83, Asn123, and Asn124.

Belongs to the peptidase S1 family. Snake venom subfamily. As to expression, expressed by the venom gland.

Its subcellular location is the secreted. Snake venom serine protease homolog that may act in the hemostasis system of the prey. In Craspedocephalus gramineus (Bamboo pit viper), this protein is Snake venom serine protease homolog 2A (TLG2A).